Reading from the N-terminus, the 433-residue chain is ATP-dependent RNA helicase SUB2 (433 aa).

Residues 1 to 17 (MSAENQEELLDYSDSEE) are compositionally biased toward acidic residues. The interval 1–39 (MSAENQEELLDYSDSEEIAVPTTTQAGEGESANDKEADK) is disordered. The short motif at 49–77 (TGFRDFLLKPELLRAIGDCGFEHPSEVQQ) is the Q motif element. The 176-residue stretch at 80 to 255 (IPQSILGTDV…KKFMQNPLEI (176 aa)) folds into the Helicase ATP-binding domain. 93–100 (AKSGLGKT) lines the ATP pocket. Residues 202–205 (DECD) carry the DEAD box motif. The region spanning 267 to 428 (GLQQYYIKLE…EFPEEGVDPS (162 aa)) is the Helicase C-terminal domain.

Belongs to the DEAD box helicase family. DECD subfamily.

It localises to the nucleus. The catalysed reaction is ATP + H2O = ADP + phosphate + H(+). Functionally, ATP-binding RNA helicase involved in transcription elongation and required for the export of mRNA out of the nucleus. SUB2 also plays a role in pre-mRNA splicing and spliceosome assembly. May be involved in rDNA and telomeric silencing, and maintenance of genome integrity. In Lodderomyces elongisporus (strain ATCC 11503 / CBS 2605 / JCM 1781 / NBRC 1676 / NRRL YB-4239) (Yeast), this protein is ATP-dependent RNA helicase SUB2 (SUB2).